The chain runs to 509 residues: ATP synthase subunit alpha (509 aa).

169-176 (GDRQTGKT) is a binding site for ATP.

It belongs to the ATPase alpha/beta chains family. As to quaternary structure, F-type ATPases have 2 components, CF(1) - the catalytic core - and CF(0) - the membrane proton channel. CF(1) has five subunits: alpha(3), beta(3), gamma(1), delta(1), epsilon(1). CF(0) has three main subunits: a(1), b(2) and c(9-12). The alpha and beta chains form an alternating ring which encloses part of the gamma chain. CF(1) is attached to CF(0) by a central stalk formed by the gamma and epsilon chains, while a peripheral stalk is formed by the delta and b chains.

It localises to the cell inner membrane. It carries out the reaction ATP + H2O + 4 H(+)(in) = ADP + phosphate + 5 H(+)(out). Produces ATP from ADP in the presence of a proton gradient across the membrane. The alpha chain is a regulatory subunit. The sequence is that of ATP synthase subunit alpha from Mesorhizobium japonicum (strain LMG 29417 / CECT 9101 / MAFF 303099) (Mesorhizobium loti (strain MAFF 303099)).